A 183-amino-acid polypeptide reads, in one-letter code: Phospholipase A2 inhibitor gamma subunit A1 (183 aa).

Intrachain disulfides connect C3/C28, C6/C13, C21/C49, C55/C76, C77/C82, C100/C125, C118/C147, and C151/C173. N-linked (GlcNAc...) asparagine glycosylation occurs at N158.

The protein belongs to the CNF-like-inhibitor family. In terms of assembly, heterodimer of subunit A and subunit B. Expressed by the liver.

The protein resides in the secreted. Its function is as follows. Phospholipase A2 (PA2) inhibitor. Inhibits the enzymatic activity of PA2 of Deinagkistrodon acutus. Also shows a wide anti-hemorrhage activities to D.acutus, Naja atra and Agkistrodon halys venom. The native protein is more potent than the recombinant one. The chain is Phospholipase A2 inhibitor gamma subunit A1 from Trimerodytes annularis (Red-bellied annulate keelback).